A 1387-amino-acid polypeptide reads, in one-letter code: DNA-directed RNA polymerase subunit beta (1387 aa).

Belongs to the RNA polymerase beta chain family. As to quaternary structure, the RNAP catalytic core consists of 2 alpha, 1 beta, 1 beta' and 1 omega subunit. When a sigma factor is associated with the core the holoenzyme is formed, which can initiate transcription.

The enzyme catalyses RNA(n) + a ribonucleoside 5'-triphosphate = RNA(n+1) + diphosphate. In terms of biological role, DNA-dependent RNA polymerase catalyzes the transcription of DNA into RNA using the four ribonucleoside triphosphates as substrates. The protein is DNA-directed RNA polymerase subunit beta of Xanthomonas campestris pv. campestris (strain ATCC 33913 / DSM 3586 / NCPPB 528 / LMG 568 / P 25).